A 116-amino-acid polypeptide reads, in one-letter code: Type IV narrow pilus major component PilA5 (116 aa).

The propeptide at 1 to 5 (MRAKG) is leader sequence. Phenylalanine 6 carries the N-methylphenylalanine modification. The helical transmembrane segment at 6–26 (FTLIELAIVIVIIGILVAIAV) threads the bilayer.

Glycosylated.

Its subcellular location is the cell inner membrane. The protein localises to the cell outer membrane. The protein resides in the periplasm. Functionally, plays an essential role in forming the main structure of the narrow T4P pili that participates in twitching motility. This is Type IV narrow pilus major component PilA5 (pilA5) from Thermus thermophilus (strain ATCC BAA-163 / DSM 7039 / HB27).